The primary structure comprises 266 residues: MPNITVTSLLAMKQKGEKITMLTCYDATFAHTASQAGVEVLLIGDSLGMVLQGHDSTLPVTTAETAYHVACVKRGNQGAMILADLPFMANATLEQTFINSATLMQAGAHMIKVEGAAWLGESIRLLAERGIPVCAHMGLTPQAVNVLGGYKVQGRLEAQARQMRADAIALEQAGAAMILLECVPSELAEEITQAVKIPVIGIGAGSATDGQVLVLHDMLGLSISGRVPKFVKNFMTGQPDIQSAIRAYVAAVKDVSFPATEHGFSA.

Mg(2+) is bound by residues D45 and D84. 3-methyl-2-oxobutanoate is bound by residues 45–46, D84, and K112; that span reads DS. Mg(2+) is bound at residue E114. The active-site Proton acceptor is E181.

Belongs to the PanB family. Homodecamer; pentamer of dimers. Mg(2+) is required as a cofactor.

The protein resides in the cytoplasm. The enzyme catalyses 3-methyl-2-oxobutanoate + (6R)-5,10-methylene-5,6,7,8-tetrahydrofolate + H2O = 2-dehydropantoate + (6S)-5,6,7,8-tetrahydrofolate. Its pathway is cofactor biosynthesis; (R)-pantothenate biosynthesis; (R)-pantoate from 3-methyl-2-oxobutanoate: step 1/2. In terms of biological role, catalyzes the reversible reaction in which hydroxymethyl group from 5,10-methylenetetrahydrofolate is transferred onto alpha-ketoisovalerate to form ketopantoate. The protein is 3-methyl-2-oxobutanoate hydroxymethyltransferase of Pseudomonas savastanoi pv. phaseolicola (strain 1448A / Race 6) (Pseudomonas syringae pv. phaseolicola (strain 1448A / Race 6)).